Reading from the N-terminus, the 300-residue chain is Putative hydrolase ML2424 (300 aa).

The Nucleophile role is filled by Asp56. Positions 56, 58, and 231 each coordinate Mg(2+). The active-site Proton donor is Asp58.

It belongs to the HAD-like hydrolase superfamily. SerB family. Mg(2+) is required as a cofactor.

This is Putative hydrolase ML2424 from Mycobacterium leprae (strain TN).